We begin with the raw amino-acid sequence, 103 residues long: Large ribosomal subunit protein bL21 (103 aa).

This sequence belongs to the bacterial ribosomal protein bL21 family. As to quaternary structure, part of the 50S ribosomal subunit. Contacts protein L20.

This protein binds to 23S rRNA in the presence of protein L20. The polypeptide is Large ribosomal subunit protein bL21 (Teredinibacter turnerae (strain ATCC 39867 / T7901)).